The following is a 391-amino-acid chain: Multidrug resistance protein MdtL (391 aa).

The Cytoplasmic segment spans residues 1-3 (MSR). Residues 4–24 (FLICSFALVLLYPAGIDMYLV) traverse the membrane as a helical segment. The Periplasmic segment spans residues 25–41 (GLPRIAADLNASEAQLH). Residues 42-62 (IAFSVYLAGMAAAMLFAGKVA) form a helical membrane-spanning segment. The Cytoplasmic segment spans residues 63–68 (DRSGRK). The helical transmembrane segment at 69-89 (PVAIPGAALFIIASVFCSLAE) threads the bilayer. Over 90 to 92 (TSA) the chain is Periplasmic. Residues 93 to 113 (LFLAGRFLQGLGAGCCYVVAF) traverse the membrane as a helical segment. Residues 114 to 130 (AILRDTLDDRRRAKVLS) lie on the Cytoplasmic side of the membrane. A helical transmembrane segment spans residues 131-151 (LLNGITCIIPVLAPVLGHLIM). Residues 152-157 (LKFPWQ) lie on the Periplasmic side of the membrane. Residues 158–178 (SLFWTMATMGIAVLMLSLFIL) form a helical membrane-spanning segment. Over 179–202 (KETRPAAPAASDKPRENSESLLNR) the chain is Cytoplasmic. Residues 203–222 (FFLSRVVITTLSVSVILTFV) form a helical membrane-spanning segment. The Periplasmic portion of the chain corresponds to 223 to 244 (NTSPVLLMEIMGFERGEYATIM). Residues 245–265 (ALTAGVSMTVSFSTPFALGIF) form a helical membrane-spanning segment. At 266–268 (KPR) the chain is on the cytoplasmic side. The chain crosses the membrane as a helical span at residues 269–289 (TLMITSQVLFLAAGITLAVSP). Residues 290-292 (SHA) lie on the Periplasmic side of the membrane. A helical membrane pass occupies residues 293-313 (VSLFGITLICAGFSVGFGVAM). Topologically, residues 314 to 330 (SQALGPFSLRAGVASST) are cytoplasmic. A helical membrane pass occupies residues 331-351 (LGIAQVCGSSLWIWLAAVVGI). Topologically, residues 352-355 (GAWN) are periplasmic. A helical transmembrane segment spans residues 356 to 376 (MLIGILIACSIVSLLLIMFVA). The Cytoplasmic segment spans residues 377-391 (PGRPVAAHEEIHHHA).

This sequence belongs to the major facilitator superfamily. DHA1 family. MdtL (TC 2.A.1.2.22) subfamily.

It is found in the cell inner membrane. In terms of biological role, confers resistance to chloramphenicol. The chain is Multidrug resistance protein MdtL from Escherichia coli O6:K15:H31 (strain 536 / UPEC).